Consider the following 423-residue polypeptide: Large ribosomal subunit protein mL37 (423 aa).

Residues 1–29 constitute a mitochondrion transit peptide; it reads MALASGPARRALAGSGQLGLGGFGAPRRG.

Belongs to the mitochondrion-specific ribosomal protein mL37 family. As to quaternary structure, component of the mitochondrial large ribosomal subunit (mt-LSU). Mature mammalian 55S mitochondrial ribosomes consist of a small (28S) and a large (39S) subunit. The 28S small subunit contains a 12S ribosomal RNA (12S mt-rRNA) and 30 different proteins. The 39S large subunit contains a 16S rRNA (16S mt-rRNA), a copy of mitochondrial valine transfer RNA (mt-tRNA(Val)), which plays an integral structural role, and 52 different proteins. mL37 forms a heterodimer with mL65.

The protein localises to the mitochondrion. The protein is Large ribosomal subunit protein mL37 (MRPL37) of Homo sapiens (Human).